A 489-amino-acid polypeptide reads, in one-letter code: Tripartite motif-containing protein 10 (489 aa).

Residues 16–61 (CPVCQGTLREPVTIDCGHNFCRVCLTRYLEITSPDPEEPPTCPLCK) form an RING-type zinc finger. The B box-type zinc finger occupies 94-135 (DEEDVCPEHGEKVYFFCEDDEMQLCVVCREAWEHRAHTVRFL). Residues C99, H102, C121, and H127 each coordinate Zn(2+). A coiled-coil region spans residues 142 to 245 (YREQIQKCLE…IEELEEKKER (104 aa)). Residues 292-486 (REMKMFLEKL…FSLSSQEGAA (195 aa)) enclose the B30.2/SPRY domain.

It belongs to the TRIM/RBCC family. Interacts with IFNAR1; this interaction prevents association of IFNAR1 with TYK2.

It localises to the cytoplasm. Its function is as follows. E3 ligase that plays an essential role in the differentiation and survival of terminal erythroid cells. May directly bind to PTEN and promote its ubiquitination, resulting in its proteasomal degradation and activation of hypertrophic signaling. In addition, plays a role in immune response regulation by repressing the phosphorylation of STAT1 and STAT2 in the interferon/JAK/STAT signaling pathway independent of its E3 ligase activity. Mechanistically, interacts with the intracellular domain of IFNAR1 and thereby inhibits the association between TYK2 and IFNAR1. The protein is Tripartite motif-containing protein 10 (TRIM10) of Bos taurus (Bovine).